Here is a 309-residue protein sequence, read N- to C-terminus: Transcription termination/antitermination protein NusG (309 aa).

2 disordered regions span residues 1–24 and 58–91; these read MSDP…ADDE and EGDH…VEAG. Over residues 65 to 91 the composition is skewed to acidic residues; it reads TDEDIEAGAVETDEDVETDTDEDVEAG.

It belongs to the NusG family.

In terms of biological role, participates in transcription elongation, termination and antitermination. In Streptomyces galbus, this protein is Transcription termination/antitermination protein NusG.